Reading from the N-terminus, the 267-residue chain is NADP-dependent mannitol dehydrogenase (267 aa).

2 residues coordinate NADP(+): Asn-108 and Lys-141. Ser-160 serves as the catalytic Proton donor. Positions 175, 179, 207, and 209 each coordinate NADP(+). Tyr-175 acts as the Proton acceptor in catalysis. Catalysis depends on Lys-179, which acts as the Lowers pKa of active site Tyr.

Belongs to the short-chain dehydrogenases/reductases (SDR) family. As to quaternary structure, exists as monomer, dimer and tetramer.

The catalysed reaction is D-mannitol + NADP(+) = D-fructose + NADPH + H(+). Interconverts D-mannitol and D-fructose. Not active with fructose 6-phosphate or NADH. The protein is NADP-dependent mannitol dehydrogenase of Davidiella tassiana (Mycosphaerella tassiana).